Consider the following 896-residue polypeptide: C-type lectin domain-containing protein 180 (896 aa).

A signal peptide spans Met1 to Ala18. The 125-residue stretch at Pro54–Ala178 folds into the C-type lectin domain. Asn133 carries N-linked (GlcNAc...) asparagine glycosylation. A disulfide bridge links Cys154 with Cys169. 2 N-linked (GlcNAc...) asparagine glycosylation sites follow: Asn221 and Asn235. 4 disordered regions span residues Ser243–Lys264, Val354–Glu436, Glu492–Lys519, and Lys557–Pro809. Acidic residues predominate over residues Ser250 to Glu260. Composition is skewed to basic and acidic residues over residues Val354 to Glu382 and Asp395 to Glu406. The segment covering Glu407–Glu426 has biased composition (acidic residues). Positions Ser427–Glu436 are enriched in basic and acidic residues. 3 stretches are compositionally biased toward basic and acidic residues: residues Lys575 to Asn590, Gln607 to Leu663, and Glu683 to Glu692. The span at Ser727–Glu739 shows a compositional bias: low complexity. Residues Val740 to Gln768 show a composition bias toward basic and acidic residues. Residues Thr773–Pro809 are compositionally biased toward low complexity.

It localises to the secreted. This is C-type lectin domain-containing protein 180 (clec-180) from Caenorhabditis elegans.